The chain runs to 1128 residues: Inactive phospholipase C-like protein 2 (1128 aa).

Positions 1-129 (MAECGRGAAG…KKTVSFSSMP (129 aa)) are disordered. At A2 the chain carries N-acetylalanine. Phosphoserine is present on S16. Low complexity predominate over residues 20–30 (ALGAKGALKAG). The segment covering 31–43 (AGEGGGGGGGGRL) has biased composition (gly residues). T85 is modified (phosphothreonine). The PH domain occupies 142 to 252 (NSMVEGSELK…WVTGLRYLIS (111 aa)). One can recognise a PI-PLC X-box domain in the interval 427-571 (QDMKQPLSHY…LKGKILIKAK (145 aa)). Phosphothreonine is present on T585. Positions 619–735 (LSELVSICKS…GYVLRPAIMR (117 aa)) constitute a PI-PLC Y-box domain. In terms of domain architecture, C2 spans 735 to 864 (REEVSFFSAN…TGYRHVPLQS (130 aa)). The disordered stretch occupies residues 1100-1128 (KPGTENSEAQKPRRSLEAIPEKASDENGD). Residues 1107-1128 (EAQKPRRSLEAIPEKASDENGD) are compositionally biased toward basic and acidic residues. Residue S1114 is modified to Phosphoserine.

In terms of tissue distribution, ubiquitously expressed, with a strong expression in skeletal muscle.

It localises to the cytoplasm. Its function is as follows. May play an role in the regulation of Ins(1,4,5)P3 around the endoplasmic reticulum. The protein is Inactive phospholipase C-like protein 2 (Plcl2) of Mus musculus (Mouse).